We begin with the raw amino-acid sequence, 307 residues long: Ornithine carbamoyltransferase (307 aa).

Carbamoyl phosphate contacts are provided by residues 50–53, Gln-77, Arg-101, and 128–131; these read STRT and HPCQ. Residues Asn-160, Asp-224, and 228–229 each bind L-ornithine; that span reads SM. Residues 264–265 and Arg-292 contribute to the carbamoyl phosphate site; that span reads CL.

This sequence belongs to the aspartate/ornithine carbamoyltransferase superfamily. OTCase family.

Its subcellular location is the cytoplasm. The enzyme catalyses carbamoyl phosphate + L-ornithine = L-citrulline + phosphate + H(+). The protein operates within amino-acid biosynthesis; L-arginine biosynthesis; L-arginine from L-ornithine and carbamoyl phosphate: step 1/3. In terms of biological role, reversibly catalyzes the transfer of the carbamoyl group from carbamoyl phosphate (CP) to the N(epsilon) atom of ornithine (ORN) to produce L-citrulline. In Mycolicibacterium gilvum (strain PYR-GCK) (Mycobacterium gilvum (strain PYR-GCK)), this protein is Ornithine carbamoyltransferase.